The chain runs to 361 residues: Phosphate acyltransferase (361 aa).

It belongs to the PlsX family. Homodimer. Probably interacts with PlsY.

It is found in the cytoplasm. The catalysed reaction is a fatty acyl-[ACP] + phosphate = an acyl phosphate + holo-[ACP]. The protein operates within lipid metabolism; phospholipid metabolism. Functionally, catalyzes the reversible formation of acyl-phosphate (acyl-PO(4)) from acyl-[acyl-carrier-protein] (acyl-ACP). This enzyme utilizes acyl-ACP as fatty acyl donor, but not acyl-CoA. This Anaeromyxobacter dehalogenans (strain 2CP-C) protein is Phosphate acyltransferase.